Here is a 258-residue protein sequence, read N- to C-terminus: Ubiquinone/menaquinone biosynthesis C-methyltransferase UbiE (258 aa).

Residues 1–21 (MSESRTSADGGMETSYGFREV) are disordered. S-adenosyl-L-methionine is bound by residues threonine 81, aspartate 102, and 130–131 (NA).

Belongs to the class I-like SAM-binding methyltransferase superfamily. MenG/UbiE family.

It carries out the reaction a 2-demethylmenaquinol + S-adenosyl-L-methionine = a menaquinol + S-adenosyl-L-homocysteine + H(+). The enzyme catalyses a 2-methoxy-6-(all-trans-polyprenyl)benzene-1,4-diol + S-adenosyl-L-methionine = a 5-methoxy-2-methyl-3-(all-trans-polyprenyl)benzene-1,4-diol + S-adenosyl-L-homocysteine + H(+). It participates in quinol/quinone metabolism; menaquinone biosynthesis; menaquinol from 1,4-dihydroxy-2-naphthoate: step 2/2. It functions in the pathway cofactor biosynthesis; ubiquinone biosynthesis. In terms of biological role, methyltransferase required for the conversion of demethylmenaquinol (DMKH2) to menaquinol (MKH2) and the conversion of 2-polyprenyl-6-methoxy-1,4-benzoquinol (DDMQH2) to 2-polyprenyl-3-methyl-6-methoxy-1,4-benzoquinol (DMQH2). In Rhizobium johnstonii (strain DSM 114642 / LMG 32736 / 3841) (Rhizobium leguminosarum bv. viciae), this protein is Ubiquinone/menaquinone biosynthesis C-methyltransferase UbiE.